The primary structure comprises 135 residues: Small ribosomal subunit protein bS6 (135 aa).

Residues 104–135 (FSRLDRNGHIGHDEKHPRSPSRQREDVIEGVE) form a disordered region.

It belongs to the bacterial ribosomal protein bS6 family.

In terms of biological role, binds together with bS18 to 16S ribosomal RNA. This Bartonella henselae (strain ATCC 49882 / DSM 28221 / CCUG 30454 / Houston 1) (Rochalimaea henselae) protein is Small ribosomal subunit protein bS6.